The primary structure comprises 560 residues: Dihydroxy-acid dehydratase (560 aa).

Cys50 provides a ligand contact to [2Fe-2S] cluster. Asp82 contributes to the Mg(2+) binding site. Cys123 lines the [2Fe-2S] cluster pocket. Residues Asp124 and Lys125 each contribute to the Mg(2+) site. Lys125 bears the N6-carboxylysine mark. Cys195 lines the [2Fe-2S] cluster pocket. A Mg(2+)-binding site is contributed by Glu447. The active-site Proton acceptor is the Ser473.

The protein belongs to the IlvD/Edd family. In terms of assembly, homodimer. The cofactor is [2Fe-2S] cluster. Requires Mg(2+) as cofactor.

The enzyme catalyses (2R)-2,3-dihydroxy-3-methylbutanoate = 3-methyl-2-oxobutanoate + H2O. The catalysed reaction is (2R,3R)-2,3-dihydroxy-3-methylpentanoate = (S)-3-methyl-2-oxopentanoate + H2O. It functions in the pathway amino-acid biosynthesis; L-isoleucine biosynthesis; L-isoleucine from 2-oxobutanoate: step 3/4. Its pathway is amino-acid biosynthesis; L-valine biosynthesis; L-valine from pyruvate: step 3/4. In terms of biological role, functions in the biosynthesis of branched-chain amino acids. Catalyzes the dehydration of (2R,3R)-2,3-dihydroxy-3-methylpentanoate (2,3-dihydroxy-3-methylvalerate) into 2-oxo-3-methylpentanoate (2-oxo-3-methylvalerate) and of (2R)-2,3-dihydroxy-3-methylbutanoate (2,3-dihydroxyisovalerate) into 2-oxo-3-methylbutanoate (2-oxoisovalerate), the penultimate precursor to L-isoleucine and L-valine, respectively. The protein is Dihydroxy-acid dehydratase of Methylibium petroleiphilum (strain ATCC BAA-1232 / LMG 22953 / PM1).